A 114-amino-acid polypeptide reads, in one-letter code: Ig heavy chain V-A2 region BS-1 (114 aa).

Gln-1 is subject to Pyrrolidone carboxylic acid. The region spanning 1–107 (QSVKESEGGL…YLGLMDVWGP (107 aa)) is the Ig-like domain.

In Oryctolagus cuniculus (Rabbit), this protein is Ig heavy chain V-A2 region BS-1.